Consider the following 417-residue polypeptide: Serine hydroxymethyltransferase (417 aa).

Lysine 54 carries the post-translational modification N6-acetyllysine. Residues leucine 121 and 125–127 (GHL) contribute to the (6S)-5,6,7,8-tetrahydrofolate site. Lysine 229 bears the N6-(pyridoxal phosphate)lysine mark. N6-acetyllysine is present on residues lysine 250, lysine 285, and lysine 354. 355 to 357 (SPF) lines the (6S)-5,6,7,8-tetrahydrofolate pocket. Lysine 375 bears the N6-acetyllysine mark.

It belongs to the SHMT family. Homodimer. Requires pyridoxal 5'-phosphate as cofactor.

The protein resides in the cytoplasm. It catalyses the reaction (6R)-5,10-methylene-5,6,7,8-tetrahydrofolate + glycine + H2O = (6S)-5,6,7,8-tetrahydrofolate + L-serine. The protein operates within one-carbon metabolism; tetrahydrofolate interconversion. It participates in amino-acid biosynthesis; glycine biosynthesis; glycine from L-serine: step 1/1. Functionally, catalyzes the reversible interconversion of serine and glycine with tetrahydrofolate (THF) serving as the one-carbon carrier. This reaction serves as the major source of one-carbon groups required for the biosynthesis of purines, thymidylate, methionine, and other important biomolecules. Also exhibits THF-independent aldolase activity toward beta-hydroxyamino acids, producing glycine and aldehydes, via a retro-aldol mechanism. This is Serine hydroxymethyltransferase from Escherichia coli O1:K1 / APEC.